We begin with the raw amino-acid sequence, 418 residues long: Equilibrative nucleotide transporter 3 (418 aa).

11 helical membrane-spanning segments follow: residues 20 to 40, 56 to 76, 86 to 106, 112 to 132, 142 to 162, 186 to 206, 264 to 284, 291 to 311, 326 to 346, 353 to 373, and 392 to 412; these read MVVC…MLTI, VLTL…AYHE, LIGY…DLAT, IGPY…DATV, LMCP…GALT, MFLA…AYVF, YAVN…GFLY, GLGD…DLVG, KLIT…YFTA, WMIM…VCIM, and LVIF…LWLI.

This sequence belongs to the SLC29A/ENT transporter (TC 2.A.57) family. Expressed in root tips, vasculature of roots and leaves, and meristems of leaf primordia. Expressed in flowers and siliques.

Its subcellular location is the cell membrane. Functionally, nucleoside transporter that functions as a pyrimidine nucleoside carrier in all organs. Has high affinity for adenosine and uridine when expressed in a heterologous system (yeast). Mediates proton-dependent adenosine or uridine transport in Xenopus oocytes. This chain is Equilibrative nucleotide transporter 3, found in Arabidopsis thaliana (Mouse-ear cress).